The chain runs to 489 residues: MAARCTEAVLAALGVLSVCSASSSGSEASGEAEREEPWDGAVFRPPAALGAVGIARGPGSPPPGNREAVDLPVLLWWSPGLFPHFPGDSERIQCAHGACVASRDRRARADPRTRALLFYGTDFRAADAPLPRLAHQSWALLHEESPLNNFLLSHGPGIRLFNLTATFSRHSDYPLPLQWLPGAAYLRRPAPPPRERAEWRRRGYAPLLYLQSHCDVPSDRDRYVRELMRYIPVDSYGKCLQNREPPTVRLQDTATATTEDPELMAFLSRYKFHLALENAICNDYMTEKLWRPMHLGAVPVYRGSPSVRDWMPNNHSVILIDDFESPQKLAEFIDFLDKNDDEYMKYLAYKQPGGITNQFLLDNLEHREWGVNDPMLPNYLNGFECFVCDHELARLNAEKAHASSHGDIPVPEPRIAQSSHMNCPVPTPGFGKVEEIPENDSWKEMWLQDYWQGLYQGEALTAMIHNNETQQRKFWDYVHEIFMKRNKNL.

At 1 to 7 (MAARCTE) the chain is on the cytoplasmic side. Residues 8 to 24 (AVLAALGVLSVCSASSS) form a helical; Signal-anchor for type II membrane protein membrane-spanning segment. At 25–489 (GSEASGEAER…EIFMKRNKNL (465 aa)) the chain is on the lumenal side. N-linked (GlcNAc...) asparagine glycosylation is present at N162. C385 and C388 are oxidised to a cystine.

Belongs to the glycosyltransferase 10 family. As to expression, widely expressed. Expressed at slightly higher level in heart, kidney and lung.

The protein localises to the endoplasmic reticulum membrane. It carries out the reaction L-threonyl-[protein] + GDP-beta-L-fucose = 3-O-(alpha-L-fucosyl)-L-threonyl-[protein] + GDP + H(+). The enzyme catalyses L-seryl-[protein] + GDP-beta-L-fucose = 3-O-(alpha-L-fucosyl)-L-seryl-[protein] + GDP + H(+). It functions in the pathway protein modification; protein glycosylation. Its function is as follows. Protein O-fucosyltransferase that specifically catalyzes O-fucosylation of serine or threonine residues in EMI domains of target proteins, such as MMRN1, MMRN2 and EMID1. Attaches fucose through an O-glycosidic linkage. O-fucosylation of EMI domain-containing proteins may be required for facilitating protein folding and secretion. Also shows minor alpha-(1,3)-fucosyltransferase activity toward activity toward biantennary N-glycan acceptors. However, this was tested with a library of synthetic substrates and this activity is unsure in vivo. The chain is GDP-fucose protein O-fucosyltransferase 4 (Fut11) from Mus musculus (Mouse).